The chain runs to 445 residues: Hydroxycinnamoyl-CoA:5-hydroxyanthranilate N-hydroxycinnamoyltransferase HHT4 (445 aa).

Belongs to the plant acyltransferase family.

It carries out the reaction 5-hydroxyanthranilate + (E)-4-coumaroyl-CoA = avenanthramide A + CoA. It catalyses the reaction 5-hydroxyanthranilate + (E)-caffeoyl-CoA = avenanthramide C + CoA. Functionally, involved in the biosynthesis of avenanthramide phytoalexins, which are phenolic alkaloids found mainly in oats. Catalyzes the N-acylation of 5-hydroxyanthranilate with 4-coumaroyl-CoA or caffeoyl-CoA as acyl donors, forming avenanthramide A and avenanthramide C, respectively. Does not accept feruloyl-CoA as a substrate. This is Hydroxycinnamoyl-CoA:5-hydroxyanthranilate N-hydroxycinnamoyltransferase HHT4 from Avena sativa (Oat).